Consider the following 448-residue polypeptide: Chromosomal replication initiator protein DnaA (448 aa).

The segment at 1-73 (MNTHLTETWE…VNALKLLTSK (73 aa)) is domain I, interacts with DnaA modulators. Residues 73–109 (KKYNIDFIVTTEEKIEENQKNHNNEKSNIVVNDEMST) form a domain II region. The tract at residues 110–326 (MLNPKYTFDS…GALIRIVAFS (217 aa)) is domain III, AAA+ region. ATP-binding residues include G154, G156, K157, and T158. The segment at 327 to 448 (SLTNKEISID…KELNKRINQK (122 aa)) is domain IV, binds dsDNA.

This sequence belongs to the DnaA family. In terms of assembly, oligomerizes as a right-handed, spiral filament on DNA at oriC.

The protein resides in the cytoplasm. Its function is as follows. Plays an essential role in the initiation and regulation of chromosomal replication. ATP-DnaA binds to the origin of replication (oriC) to initiate formation of the DNA replication initiation complex once per cell cycle. Binds the DnaA box (a 9 base pair repeat at the origin) and separates the double-stranded (ds)DNA. Forms a right-handed helical filament on oriC DNA; dsDNA binds to the exterior of the filament while single-stranded (ss)DNA is stabiized in the filament's interior. The ATP-DnaA-oriC complex binds and stabilizes one strand of the AT-rich DNA unwinding element (DUE), permitting loading of DNA polymerase. After initiation quickly degrades to an ADP-DnaA complex that is not apt for DNA replication. Binds acidic phospholipids. This Clostridium botulinum (strain ATCC 19397 / Type A) protein is Chromosomal replication initiator protein DnaA.